The primary structure comprises 88 residues: UPF0250 protein Ssed_3490 (88 aa).

This sequence belongs to the UPF0250 family.

This is UPF0250 protein Ssed_3490 from Shewanella sediminis (strain HAW-EB3).